Here is a 239-residue protein sequence, read N- to C-terminus: Ribose-5-phosphate isomerase A (239 aa).

Substrate-binding positions include 40–43 (SGST), 96–99 (DGAD), and 110–113 (KGGG). Glutamate 119 (proton acceptor) is an active-site residue. Residue lysine 137 coordinates substrate.

This sequence belongs to the ribose 5-phosphate isomerase family. As to quaternary structure, homodimer.

It carries out the reaction aldehydo-D-ribose 5-phosphate = D-ribulose 5-phosphate. Its pathway is carbohydrate degradation; pentose phosphate pathway; D-ribose 5-phosphate from D-ribulose 5-phosphate (non-oxidative stage): step 1/1. In terms of biological role, catalyzes the reversible conversion of ribose-5-phosphate to ribulose 5-phosphate. The polypeptide is Ribose-5-phosphate isomerase A (Methanococcus maripaludis (strain C6 / ATCC BAA-1332)).